Reading from the N-terminus, the 374-residue chain is MGLLVFVRNLLLALCLFLVLGFLYYSAWKLHLLQWEDSNSLLLSLDSAGQTLGTEYDRLGFLLKLDSKLPAELATKYANFSEGACKPGYASAMMTAIFPRFSKPAPMFLDDSFRKWARIREFVPPFGIKGQDNLIKAILSVTKEYRLTPALDSLHCRRCIIVGNGGVLANKSLGSRIDDYDIVIRLNSAPVKGFERDVGSKTTLRITYPEGAMQRPEQYERDSLFVLAGFKWQDFKWLKYIVYKERVSASDGFWKSVATRVPKEPPEIRILNPYFIQEAAFTLIGLPFNNGLMGRGNIPTLGSVAVTMALHGCDEVAVAGFGYDMNTPNAPLHYYETVRMAAIKESWTHNIQREKEFLRKLVKARVITDLSSGI.

At Met-1 to Arg-8 the chain is on the cytoplasmic side. Residues Asn-9–Trp-28 form a helical; Signal-anchor for type II membrane protein membrane-spanning segment. The Lumenal portion of the chain corresponds to Lys-29–Ile-374. Asn-79 and Asn-170 each carry an N-linked (GlcNAc...) asparagine glycan. Cys-159 and Cys-313 are oxidised to a cystine.

Belongs to the glycosyltransferase 29 family. Found in all tissues tested. High expression found in brain, liver, kidney, colon, heart and spleen.

It localises to the membrane. The protein localises to the golgi apparatus. Its subcellular location is the golgi stack membrane. The catalysed reaction is a beta-D-galactosyl-(1-&gt;4)-N-acetyl-beta-D-glucosaminyl derivative + CMP-N-acetyl-beta-neuraminate = an N-acetyl-alpha-neuraminyl-(2-&gt;3)-beta-D-galactosyl-(1-&gt;4)-N-acetyl-beta-D-glucosaminyl derivative + CMP + H(+). It functions in the pathway protein modification; protein glycosylation. In terms of biological role, catalyzes the formation of the NeuAc-alpha-2,3-Gal-beta-1,4-GlcNAc-, NeuAc-alpha-2,3-Gal-beta-1,3-GlcNAc- and NeuAc-alpha-2,3-Gal-beta-1,3-GalNAc- sequences found in terminal carbohydrate groups of glycoproteins and glycolipids. The highest activity is toward Gal-beta-1,3-GlcNAc and the lowest toward Gal-beta-1,3-GalNAc. This chain is CMP-N-acetylneuraminate-beta-1,4-galactoside alpha-2,3-sialyltransferase (St3gal3), found in Mus musculus (Mouse).